Reading from the N-terminus, the 1355-residue chain is NACHT, LRR and PYD domains-containing protein 1 homolog (1355 aa).

An NACHT domain is found at 257-458 (KTVILCGDSG…SVPLLCWMVC (202 aa)). 263 to 270 (GDSGRGKS) serves as a coordination point for ATP. A ZU5 region spans residues 977–1109 (DSDQWVQVEP…FHAKILQPMF (133 aa)). The FIIND domain maps to 977–1252 (DSDQWVQVEP…NKTESDLFQS (276 aa)). Residues 1110 to 1252 (SPKTVLVKLG…NKTESDLFQS (143 aa)) are UPA. The CARD domain maps to 1278–1354 (LIKSVENVDT…NLLNHLPSSD (77 aa)).

This sequence belongs to the NLRP family. As to quaternary structure, interacts with the C-terminal part of nlrp1 (NACHT, LRR and PYD domains-containing protein 1, C-terminus) in absence of pathogens and other damage-associated signals. In terms of assembly, interacts with the N-terminal part of nlrp1 (NACHT, LRR and PYD domains-containing protein 1, N-terminus) in absence of pathogens and other damage-associated signals. Homomultimer; forms the nlrp1 inflammasome polymeric complex, a filament composed of homopolymers of this form in response to pathogens and other damage-associated signals. The nlrp1 inflammasome polymeric complex associates with pycard/asc. Interacts (via CARD domain) with pycard/asc (via CARD domain); leading to pro-inflammatory caspases (caspa and/or caspb) recruitment. Pro-caspase-a and pro-caspase-b filament formation increases local enzyme concentration, resulting in trans-autocleavage and activation. Active caspa and caspb then processes il1b and il18 precursors, leading to the release of mature cytokines in the extracellular milieu and inflammatory response. In terms of processing, autocatalytically cleaved. Autocatalytic cleavage in FIIND region occurs constitutively, prior to activation signals, and is required for inflammasome activity (IL1B release), possibly by facilitating pro-inflammatory caspases (caspa and/or caspb) binding. Both N- and C-terminal parts remain associated non-covalently. Post-translationally, ubiquitinated in response to pathogen-associated signals, leading to its degradation by the proteasome and subsequent release of the cleaved C-terminal part of the protein (NACHT, LRR and PYD domains-containing protein 1, C-terminus), which polymerizes and forms the nlrp1 inflammasome. As to expression, expressed in adult spleen, head kidney, gill and skin and also in the embryo.

It localises to the cytoplasm. The protein localises to the inflammasome. Its activity is regulated as follows. nlrp1 inflammasome is activated by pathogens and other damage-associated signals: activation promotes ubiquitination and degradation of the N-terminal part, releasing the cleaved C-terminal part of the protein (NACHT, LRR and PYD domains-containing protein 1, C-terminus), which polymerizes and forms the nlrp1 inflammasome. In terms of biological role, acts as the sensor component of the nlrp1 inflammasome, which mediates inflammasome activation in response to various pathogen-associated signals, leading to subsequent pyroptosis. Inflammasomes are supramolecular complexes that assemble in the cytosol in response to pathogens and other damage-associated signals and play critical roles in innate immunity and inflammation. Acts as a recognition receptor (PRR): recognizes specific pathogens and other damage-associated signals, and mediates the formation of the inflammasome polymeric complex. In response to pathogen-associated signals, the N-terminal part of nlrp1 is degraded by the proteasome, releasing the cleaved C-terminal part of the protein (NACHT, LRR and PYD domains-containing protein 1, C-terminus), which polymerizes to initiate the formation of the inflammasome complex: the inflammasome recruits and activate pro-inflammatory caspases (caspa and/or caspb), leading to pyroptosis. Its function is as follows. Constitutes the precursor of the nlrp1 inflammasome, which mediates autoproteolytic processing within the FIIND domain to generate the N-terminal and C-terminal parts, which are associated non-covalently in absence of pathogens and other damage-associated signals. Functionally, regulatory part that prevents formation of the nlrp1 inflammasome: in absence of pathogens and other damage-associated signals, interacts with the C-terminal part of nlrp1 (NACHT, LRR and PYD domains-containing protein 1, C-terminus), preventing activation of the nlrp1 inflammasome. In response to pathogen-associated signals, this part is ubiquitinated and degraded by the proteasome, releasing the cleaved C-terminal part of the protein, which polymerizes and forms the nlrp1 inflammasome. Constitutes the active part of the nlrp1 inflammasome. In absence of pathogens and other damage-associated signals, interacts with the N-terminal part of nlrp1 (NACHT, LRR and PYD domains-containing protein 1, N-terminus), preventing activation of the nlrp1 inflammasome. In response to pathogen-associated signals, the N-terminal part of nlrp1 is degraded by the proteasome, releasing this form, which polymerizes to form the nlrp1 inflammasome complex: the nlrp1 inflammasome complex then directly recruits and activates pro-inflammatory caspases (caspa and/or caspb) activation, leading to subsequent pyroptosis. This Danio rerio (Zebrafish) protein is NACHT, LRR and PYD domains-containing protein 1 homolog.